Reading from the N-terminus, the 772-residue chain is MTDTTAQHVVDTVANAAATPEREQPFAALGLKPDEYASIREILGRRPTNGELAMYSVMWSEHCSYKSSKIYLRQFGQKVTPAMKKNLMVGMGENAGVVDIGEGWAVTFKVESHNHPSYIEPFQGAATGVGGIVRDIISMGARPVAVMDQLRFGAIDEPDTAHVVHGVVSGISFYGNCLGLPNIGGETYFDPVYQGNPLVNALSVGVLRHEDLHLANASGVGNKVVLFGARTGGDGIGGASILASDTFSEGGPTKRPAVQVGDPFAEKVLIECCLELYRDKLVEGIQDLGAAGISCATSELASNGDGGMFIELDSVLLRDPSLTAEEILMSESQERMMAVVKPELLDQFLAVTAKWDVETSVLGEVTGTGRLVINWHGEEIANVDPRTVAIDGPVYERPVAYPSWIDALRADSASALALPVSGDALREQALALLGSANLADKSWITDQYDYFVGGNTALAFPDDAGMIRVDEESGLGFAIATDANGRYCQLDPKEGAKLALAEAYRNVAASGAVPAAVTDCLNFGSPENPEVMWQFSQAVEGLSDACLELGIPVTGGNVSFYNQTGDVPIFPTPVVGVLGVIDDVARRIPAGWQDEGENIYLLGITREELDGSAWAATVHGHLGGRPPAVDLAAERRLAETLHAASQQGLISSAHDLADGGLAQALTESVLRFGVGARVWLGDIAERDGVDAASALFSESTARAIVSVPREDDVKFRGLCDGRGVPALRIGVTDAGAGTEPVLEIQDLFAIEVAELRSVHRSTLAERFGPVVG.

Residue histidine 62 is part of the active site. 2 residues coordinate ATP: tyrosine 65 and lysine 109. Glutamate 111 lines the Mg(2+) pocket. Substrate-binding positions include 112 to 115 and arginine 134; that span reads SHNH. Histidine 113 acts as the Proton acceptor in catalysis. Residue aspartate 135 coordinates Mg(2+). Residue glutamine 259 coordinates substrate. Aspartate 287 is a Mg(2+) binding site. Substrate is bound at residue 331 to 333; the sequence is ESQ. ATP-binding residues include aspartate 519 and glycine 556. Residue asparagine 557 coordinates Mg(2+). Serine 559 is a binding site for substrate.

Belongs to the FGAMS family. As to quaternary structure, monomer. Part of the FGAM synthase complex composed of 1 PurL, 1 PurQ and 2 PurS subunits.

The protein resides in the cytoplasm. It carries out the reaction N(2)-formyl-N(1)-(5-phospho-beta-D-ribosyl)glycinamide + L-glutamine + ATP + H2O = 2-formamido-N(1)-(5-O-phospho-beta-D-ribosyl)acetamidine + L-glutamate + ADP + phosphate + H(+). It participates in purine metabolism; IMP biosynthesis via de novo pathway; 5-amino-1-(5-phospho-D-ribosyl)imidazole from N(2)-formyl-N(1)-(5-phospho-D-ribosyl)glycinamide: step 1/2. Functionally, part of the phosphoribosylformylglycinamidine synthase complex involved in the purines biosynthetic pathway. Catalyzes the ATP-dependent conversion of formylglycinamide ribonucleotide (FGAR) and glutamine to yield formylglycinamidine ribonucleotide (FGAM) and glutamate. The FGAM synthase complex is composed of three subunits. PurQ produces an ammonia molecule by converting glutamine to glutamate. PurL transfers the ammonia molecule to FGAR to form FGAM in an ATP-dependent manner. PurS interacts with PurQ and PurL and is thought to assist in the transfer of the ammonia molecule from PurQ to PurL. In Leifsonia xyli subsp. xyli (strain CTCB07), this protein is Phosphoribosylformylglycinamidine synthase subunit PurL.